A 281-amino-acid chain; its full sequence is Cell growth regulator with EF hand domain protein 1 (281 aa).

The N-terminal stretch at 1 to 21 (MSRWLMQMLMLPLLLLPLGQA) is a signal peptide. 2 consecutive EF-hand domains span residues 71 to 106 (NREQVLLYLFALHDFDQNGQLDGLELLSMLTAALAP) and 115 to 150 (PVILVVDMVLETQDLDGDGLMTPAELINFPGEAPKR). Residues aspartate 84, aspartate 86, asparagine 88, glutamine 90, glutamate 95, aspartate 128, aspartate 130, aspartate 132, and glutamate 139 each coordinate Ca(2+). Positions 146-281 (EAPKRAESLP…HSIQLENDEI (136 aa)) are disordered. Positions 169-184 (LLANSPLQSETQQSLG) are enriched in polar residues. Residues 185 to 213 (TKEEITSQVEAKRALEPEQEAGHHIETKV) show a composition bias toward basic and acidic residues. Phosphoserine is present on residues serine 217 and serine 228. The span at 234-256 (GPREDAERQVESKDNEGEAKDLP) shows a compositional bias: basic and acidic residues.

Post-translationally, probably digested extracellularly by an unknown serine protease generating extremely hydrophobic bioactive peptides. As to expression, expressed predominantly in whole brain and kidney, with limited expression in heart, lung, liver, and skeletal muscle and no expression in spleen and testis. Also expressed in pituitary gland, adrenal gland, digestive tract, and reproductive organs.

It is found in the secreted. Its function is as follows. Mediates cell-cell adhesion in a calcium-dependent manner. Able to inhibit growth in several cell lines. This Rattus norvegicus (Rat) protein is Cell growth regulator with EF hand domain protein 1.